The chain runs to 203 residues: FMN-dependent NADH:quinone oxidoreductase (203 aa).

143 to 146 (SNGG) provides a ligand contact to FMN.

This sequence belongs to the azoreductase type 1 family. As to quaternary structure, homodimer. The cofactor is FMN.

The enzyme catalyses 2 a quinone + NADH + H(+) = 2 a 1,4-benzosemiquinone + NAD(+). It carries out the reaction N,N-dimethyl-1,4-phenylenediamine + anthranilate + 2 NAD(+) = 2-(4-dimethylaminophenyl)diazenylbenzoate + 2 NADH + 2 H(+). Quinone reductase that provides resistance to thiol-specific stress caused by electrophilic quinones. In terms of biological role, also exhibits azoreductase activity. Catalyzes the reductive cleavage of the azo bond in aromatic azo compounds to the corresponding amines. This is FMN-dependent NADH:quinone oxidoreductase from Streptococcus suis (strain 98HAH33).